A 139-amino-acid polypeptide reads, in one-letter code: Probable disulfide formation protein C 1 (139 aa).

Residues 8–27 (EYALFTAWGASFIATLGSLY) traverse the membrane as a helical segment. A disulfide bridge connects residues C37 and C40. The next 2 membrane-spanning stretches (helical) occupy residues 42–61 (YQRIFMYPFVLWLGIAVVKK) and 68–85 (YSLPIASIGACISLYHYA). The cysteines at positions 99 and 104 are disulfide-linked. Residues 113–135 (GFVTIPFLALIGFITIAVCSFIV) traverse the membrane as a helical segment.

Belongs to the DsbB family. BdbC subfamily.

It is found in the cell membrane. Its function is as follows. Required for disulfide bond formation in some proteins. The sequence is that of Probable disulfide formation protein C 1 (bdbC1) from Bacillus cereus (strain ATCC 10987 / NRS 248).